The primary structure comprises 129 residues: Protein FYV12 (129 aa).

N-linked (GlcNAc...) asparagine glycosylation is present at Asn-91. Residues 109–128 traverse the membrane as a helical segment; it reads LMTTFLLYVLYVCIYISAFI.

It localises to the membrane. Its function is as follows. Involved in K1 killer toxin resistance. This Saccharomyces cerevisiae (strain ATCC 204508 / S288c) (Baker's yeast) protein is Protein FYV12 (FYV12).